The primary structure comprises 718 residues: Scarecrow-like protein 9 (718 aa).

The tract at residues 305–338 (VEKKKASDAQGGKRRARGRGRGRGRGGGGGQNGK) is disordered. A compositionally biased stretch (basic residues) spans 316-328 (GKRRARGRGRGRG). Positions 335–713 (QNGKKEVVDL…RTVMALSVWK (379 aa)) constitute a GRAS domain. A leucine repeat I (LRI) region spans residues 342 to 402 (VDLRSLLIHC…EARLAGTGSQ (61 aa)). Residues 421 to 484 (HQLFLACCPF…YGSPKVRITG (64 aa)) are VHIID. Residues 452-456 (VHVID) carry the VHIID motif. The interval 500–532 (ETGQRLAAYAKLFGVPFEYKAIAKKWDAIQLED) is leucine repeat II (LRII). Residues 541 to 635 (TVVNCLYRAE…MEVFGREALN (95 aa)) form a PFYRE region. The interval 638-713 (ACEGWERVER…RTVMALSVWK (76 aa)) is SAW.

The protein belongs to the GRAS family. In terms of tissue distribution, expressed in cotyledons, leaves and flowers, and in the elongation zone in root.

The protein resides in the nucleus. Probable transcription factor involved in plant development. The protein is Scarecrow-like protein 9 (SCL9) of Arabidopsis thaliana (Mouse-ear cress).